Consider the following 85-residue polypeptide: MDTSELERRAKICLSVVTFSTSYSLDAGVVVLAFLGIQRFRRSSKGAKIPEFLWVTWQSFIKVLSLLNGFVQHQKRYIFIRVCIY.

A run of 2 helical transmembrane segments spans residues 12–34 (ICLS…VLAF) and 49–71 (IPEF…NGFV).

The protein localises to the cell membrane. This is an uncharacterized protein from Archaeoglobus fulgidus (strain ATCC 49558 / DSM 4304 / JCM 9628 / NBRC 100126 / VC-16).